Consider the following 233-residue polypeptide: Zinc metalloproteinase recombinant fibrinogenase II (233 aa).

The region spanning 19 to 215 (KYVETVFVVD…HNPECIDNEP (197 aa)) is the Peptidase M12B domain. Ca(2+) contacts are provided by E22 and D106. 3 disulfide bridges follow: C130–C210, C170–C194, and C172–C177. H155 lines the Zn(2+) pocket. E156 is a catalytic residue. Zn(2+) is bound by residues H159 and H165. N193 carries N-linked (GlcNAc...) asparagine glycosylation. 5 residues coordinate Ca(2+): C210, N213, N228, L230, and E232.

Belongs to the venom metalloproteinase (M12B) family. P-III subfamily. The cofactor is Zn(2+). Expressed by the venom gland.

It localises to the secreted. With respect to regulation, inhibited by PMSF and EDTA. Slightly inhibited by Cu(2+) and Zn(2+). Not inhibited by aprotinin, SBTI, Ca(2+), Mg(2+), Na(+) and K(+). Snake venom zinc metalloprotease that acts at several levels. It has direct fibrino(geno)lytic activity (Aalpha chain of fibrinogen is cleaved quickly, Bbeta chain slowly, and gamma chain even more slowly) and degradation of TNF-alpha. These activities permit to protect against sepsis and disseminated intravascular coagulation. It inhibits ADP-induced platelet aggregation in human platelet-rich plasma (IC(50)=65.4 ug/ml). It decreases the activity of complement by degrading human C5, C6 and C9 in vitro, decreasing serum levels of C1q, C3 and C4 in rat, and inhibiting the MAC deposition on HUVECs membrane. This inhibition of complement protects against hyperacute rejection that is the main barrier in xenotransplantation. Has preference for Lys at the P1 position. Cleaves insulin B chain at '36-Val-|-Glu-37', '39-Leu-|-Tyr-40', and '48-Phe-|-Phe-49' bonds. Also cleaves fibronectin and type IV collagen. This chain is Zinc metalloproteinase recombinant fibrinogenase II, found in Deinagkistrodon acutus (Hundred-pace snake).